Here is a 597-residue protein sequence, read N- to C-terminus: Gigaxonin (597 aa).

The BTB domain maps to 30–99 (CDAHLVLDGE…IFSGQIRLNE (70 aa)). The BACK domain maps to 134–236 (CIGIRDFALH…DSSYLREQML (103 aa)). Kelch repeat units lie at residues 274–326 (CIVT…SAEG), 327–374 (FLFV…EIDG), 376–421 (LYIL…AMKK), 422–468 (KIYA…GVAM), 470–522 (LYVF…VYGA), and 528–574 (SIYV…AALR).

Interacts with TBCB. Interacts with CUL3. Part of a complex that contains CUL3, RBX1 and GAN. Interacts (via BTB domain) with UBA1. Interacts (via Kelch domains) with MAP1B (via C-terminus) and MAP1S (via C-terminus). Ubiquitinated by E3 ubiquitin ligase complex formed by CUL3 and RBX1 and probably targeted for proteasome-independent degradation. As to expression, expressed in brain, heart and muscle (at protein level).

The protein resides in the cytoplasm. Its subcellular location is the cytoskeleton. Its pathway is protein modification; protein ubiquitination. Probable cytoskeletal component that directly or indirectly plays an important role in neurofilament architecture. May act as a substrate-specific adapter of an E3 ubiquitin-protein ligase complex which mediates the ubiquitination and subsequent proteasomal degradation of target proteins. Controls degradation of TBCB. Controls degradation of MAP1B and MAP1S, and is critical for neuronal maintenance and survival. This is Gigaxonin from Mus musculus (Mouse).